The primary structure comprises 137 residues: VHRRRIAPRRCSEAKCRRRFGFMFQRSAKSRWFDVVLTFVPSGFVMGHVAIISVTTDVLGPRHVKRKSERQHQRVHHELPHDKPRQSQRVMHPHAFGMRAVSQFLVTHPLGEPEAHGAFAPETPVGTRSPLRSYAIL.

The segment at 67 to 87 (KSERQHQRVHHELPHDKPRQS) is disordered. A compositionally biased stretch (basic and acidic residues) spans 70-85 (RQHQRVHHELPHDKPR).

This is an uncharacterized protein from Human cytomegalovirus (strain AD169) (HHV-5).